Reading from the N-terminus, the 1460-residue chain is Venom prothrombin activator pseutarin-C non-catalytic subunit (1460 aa).

A signal peptide spans 1 to 30 (MGRYSVSPVPKCLLLMFLGWSGLKYYQVNA). The 165-residue stretch at 32 to 196 (QLREYHIAAQ…SGLIGALLIC (165 aa)) folds into the Plastocyanin-like 1 domain. 2 F5/8 type A domains span residues 32–330 (QLRE…LNIK) and 351–685 (KNWE…FLDA). Residues Lys-124, Glu-139, Asp-142, and Asp-143 each coordinate Ca(2+). N-linked (GlcNAc...) asparagine glycosylation occurs at Asn-156. A disulfide bridge links Cys-170 with Cys-196. Residues Asn-204 and Asn-242 are each glycosylated (N-linked (GlcNAc...) asparagine). Plastocyanin-like domains are found at residues 206–330 (SQKF…LNIK), 351–529 (KNWE…LLVC), and 539–685 (VQNK…FLDA). Cysteines 251 and 332 form a disulfide. N-linked (GlcNAc...) asparagine glycans are attached at residues Asn-406 and Asn-471. A disulfide bridge links Cys-503 with Cys-529. Asn-557 carries an N-linked (GlcNAc...) asparagine glycan. 4 disulfides stabilise this stretch: Cys-672–Cys-1032, Cys-966–Cys-992, Cys-1147–Cys-1298, and Cys-1303–Cys-1457. The b stretch occupies residues 693 to 818 (GNEEEEEDDG…PDDIAGRYLR (126 aa)). A propeptide spans 773–818 (SFKGSVAEEELKHTALALEEDAHASDPRIDSNSARNPDDIAGRYLR) (activation peptide (connecting region)). Plastocyanin-like domains are found at residues 824–992 (NKRR…ILIC) and 1001–1143 (NRTI…FTVI). The region spanning 824 to 1143 (NKRRYYIAAE…RGMQALFTVI (320 aa)) is the F5/8 type A 3 domain. Lys-920, Phe-935, Asp-938, and Asp-939 together coordinate Ca(2+). N-linked (GlcNAc...) asparagine glycosylation is present at Asn-944. Residues Asn-1001 and Asn-1180 are each glycosylated (N-linked (GlcNAc...) asparagine). F5/8 type C domains follow at residues 1147–1298 (CKLP…LLGC) and 1303–1457 (CSVP…LFGC).

The protein belongs to the multicopper oxidase family. In terms of assembly, heterodimer of a light and a heavy chains; non-disulfide-linked. The interaction between the two chains is calcium-dependent. Found in its active form associated with pseutarin-C catalytic subunit (AC Q56VR3). In terms of processing, in physiological conditions, blood coagulation factor V and factor Va are inactivated by activated protein C (APC) through proteolytic degradation of the heavy chain. However, pseutarin-C non-catalytic subunit (factor V-like protein) retains its full activity even at high concentration of APC. This has two explanations: this protein has only one of the three cleavage sites present in factor V that are targeted by the APC for inactivation, and the binding with the catalytic subunit protect the cleavage site from inactivation. Expressed by the venom gland.

It is found in the secreted. In terms of biological role, snake prothrombin activator that attacks the hemostatic system of prey. This non-catalytic subunit is functionally similar to blood coagulation factor V. It serves as a critical cofactor for the prothrombinase activity of the catalytic subunit, which is similar to the blood coagulation factor X. The complex converts prothrombin to thrombin by sequential cleavage at two positions, Arg-320 followed by Arg-271. Cleavage at Arg-320 produces an active intermediate known as meizothrombin. Meizothrombin is the 'second' substrate for prothrombinase, and it docks in an altered manner to present the second cleavage site (271). Cleavage at Arg-271 releases active thrombin from its pro-fragment. This order of events is reversed if the protease component of prothrombinase is used on its own, suggesting that the 271 site is inherently more accessible to proteolysis. The complex converts prothrombin to thrombin in presence but also in the absence of membrane. The protein is Venom prothrombin activator pseutarin-C non-catalytic subunit of Pseudonaja textilis (Eastern brown snake).